The primary structure comprises 263 residues: Ribosomal RNA small subunit methyltransferase A (263 aa).

Residues H13, L15, G40, E61, D86, and N105 each coordinate S-adenosyl-L-methionine.

Belongs to the class I-like SAM-binding methyltransferase superfamily. rRNA adenine N(6)-methyltransferase family. RsmA subfamily.

It is found in the cytoplasm. The catalysed reaction is adenosine(1518)/adenosine(1519) in 16S rRNA + 4 S-adenosyl-L-methionine = N(6)-dimethyladenosine(1518)/N(6)-dimethyladenosine(1519) in 16S rRNA + 4 S-adenosyl-L-homocysteine + 4 H(+). Functionally, specifically dimethylates two adjacent adenosines (A1518 and A1519) in the loop of a conserved hairpin near the 3'-end of 16S rRNA in the 30S particle. May play a critical role in biogenesis of 30S subunits. The sequence is that of Ribosomal RNA small subunit methyltransferase A from Dichelobacter nodosus (strain VCS1703A).